Reading from the N-terminus, the 91-residue chain is Cytoplasmic envelopment protein 3 (91 aa).

G2 carries the N-myristoyl glycine; by host lipid modification. Residues 48–81 (NMGTDEYDEEDEGGDGGEGREPQPEVKTTPYPKR) form a disordered region. Acidic residues predominate over residues 52 to 62 (DEYDEEDEGGD).

The protein belongs to the herpesviridae cytoplasmic envelopment protein 3 family. Interacts with cytoplasmic envelopment protein 2; this interaction is essential for the proper localization of each protein to the assembly complex and thus for the production of infectious virus. In terms of processing, myristoylation and palmitoylation (probably on one or more of the nearby cysteines at the N-terminus) enable membrane-binding and Golgi apparatus-specific targeting and are essential for efficient packaging. Post-translationally, phosphorylated. Phosphorylation does not seem to be required for recycling to the host Golgi apparatus. Packaging is selective for underphosphorylated forms.

It localises to the virion tegument. Its subcellular location is the virion membrane. The protein localises to the host cell membrane. The protein resides in the host Golgi apparatus membrane. In terms of biological role, plays an important role in the cytoplasmic envelopment of tegument proteins and capsids during the assembly and egress processes. Also participates in viral entry at the fusion step probably by regulating the core fusion machinery. The chain is Cytoplasmic envelopment protein 3 (38) from Equus caballus (Horse).